We begin with the raw amino-acid sequence, 513 residues long: ATP synthase subunit alpha (513 aa).

ATP is bound at residue 169–176 (GDRQTGKS).

The protein belongs to the ATPase alpha/beta chains family. F-type ATPases have 2 components, CF(1) - the catalytic core - and CF(0) - the membrane proton channel. CF(1) has five subunits: alpha(3), beta(3), gamma(1), delta(1), epsilon(1). CF(0) has three main subunits: a(1), b(2) and c(9-12). The alpha and beta chains form an alternating ring which encloses part of the gamma chain. CF(1) is attached to CF(0) by a central stalk formed by the gamma and epsilon chains, while a peripheral stalk is formed by the delta and b chains.

Its subcellular location is the cell inner membrane. It catalyses the reaction ATP + H2O + 4 H(+)(in) = ADP + phosphate + 5 H(+)(out). In terms of biological role, produces ATP from ADP in the presence of a proton gradient across the membrane. The alpha chain is a regulatory subunit. This Blochmanniella floridana protein is ATP synthase subunit alpha.